The chain runs to 241 residues: 4-hydroxy-tetrahydrodipicolinate reductase (241 aa).

Residues 80-82 (ATT) and 104-107 (SANM) contribute to the NAD(+) site. Histidine 136 serves as the catalytic Proton donor/acceptor. Residue histidine 137 coordinates (S)-2,3,4,5-tetrahydrodipicolinate. Catalysis depends on lysine 140, which acts as the Proton donor. 146–147 (GT) contributes to the (S)-2,3,4,5-tetrahydrodipicolinate binding site.

This sequence belongs to the DapB family.

Its subcellular location is the cytoplasm. The enzyme catalyses (S)-2,3,4,5-tetrahydrodipicolinate + NAD(+) + H2O = (2S,4S)-4-hydroxy-2,3,4,5-tetrahydrodipicolinate + NADH + H(+). It catalyses the reaction (S)-2,3,4,5-tetrahydrodipicolinate + NADP(+) + H2O = (2S,4S)-4-hydroxy-2,3,4,5-tetrahydrodipicolinate + NADPH + H(+). Its pathway is amino-acid biosynthesis; L-lysine biosynthesis via DAP pathway; (S)-tetrahydrodipicolinate from L-aspartate: step 4/4. Functionally, catalyzes the conversion of 4-hydroxy-tetrahydrodipicolinate (HTPA) to tetrahydrodipicolinate. The protein is 4-hydroxy-tetrahydrodipicolinate reductase of Staphylococcus haemolyticus (strain JCSC1435).